Consider the following 623-residue polypeptide: Protein FAM234B (623 aa).

The disordered stretch occupies residues 1–82; it reads MATVLSRALK…TSERAPEGYP (82 aa). Residues 104–124 form a helical membrane-spanning segment; the sequence is AVFLLTVVISMILVLVCAFLI.

The protein belongs to the FAM234 family.

It localises to the membrane. Its subcellular location is the golgi outpost. The protein resides in the cytoplasm. The protein localises to the cytoskeleton. It is found in the microtubule organizing center. The chain is Protein FAM234B (FAM234B) from Gallus gallus (Chicken).